The following is a 230-amino-acid chain: Cytidylate kinase (230 aa).

An ATP-binding site is contributed by glycine 16–threonine 24.

The protein belongs to the cytidylate kinase family. Type 1 subfamily.

Its subcellular location is the cytoplasm. It carries out the reaction CMP + ATP = CDP + ADP. It catalyses the reaction dCMP + ATP = dCDP + ADP. The sequence is that of Cytidylate kinase from Lactobacillus gasseri (strain ATCC 33323 / DSM 20243 / BCRC 14619 / CIP 102991 / JCM 1131 / KCTC 3163 / NCIMB 11718 / NCTC 13722 / AM63).